Here is a 387-residue protein sequence, read N- to C-terminus: O-methyltransferase asqD (387 aa).

An S-adenosyl-L-methionine-binding site is contributed by aspartate 252. Catalysis depends on histidine 294, which acts as the Proton acceptor.

This sequence belongs to the class I-like SAM-binding methyltransferase superfamily. Cation-independent O-methyltransferase family.

It participates in secondary metabolite biosynthesis. The protein operates within alkaloid biosynthesis. Its pathway is mycotoxin biosynthesis. O-methyltransferase; part of the gene cluster that mediates the biosynthesis of the aspoquinolone mycotoxins. The role of asqD within the aspoquinolone pathway has still to be determined. The first step of the pathway is catalyzed by the nonribosomal peptide synthetase asqK that condenses anthranilic acid and O-methyl-L-tyrosine to produce 4'-methoxycyclopeptin. 4'-methoxycyclopeptin is then converted to 4'-methoxydehydrocyclopeptin by the ketoglutarate-dependent dioxygenase asqJ. AsqJ also converts its first product 4'-methoxydehydrocyclopeptin to 4'-methoxycyclopenin. The following conversion of 4'-methoxycyclopenin into 4'-methoxyviridicatin is catalyzed by the cyclopenase asqI. 4'-methoxyviridicatin is the precursor of quinolone natural products, and is further converted to quinolinone B. The prenyltransferase asqH1 then catalyzes the canonical Friedel-Crafts alkylation of quinolinone B with dimethylallyl cation to yield dimethylallyl quinolone, which is subjected to FAD-dependent dehydrogenation by the FAD-linked oxidoreductase asqF to yield conjugated aryl diene. The delta(3') double bond then serves as the site of the second alkylation with DMAPP catalyzed by the prenyltransferase asqH2 to yield a carbenium ion intermediate, which can be attacked by H(2)O to yield a styrenyl quinolone containing a C3'-hydroxyprenyl chain. The FAD-dependent monooxygenase asqG performs epoxidation of the terminal C7'-C8' olefin. Finally, after dehydratation of the epoxide at C3 by asqC, the quinolone epoxide rearrangement protein asqO catalyzes an enzymatic 3-exo-tet cyclization to yield the cyclopropyl-THF ring system in aspoquinolone. The sequence is that of O-methyltransferase asqD from Emericella nidulans (strain FGSC A4 / ATCC 38163 / CBS 112.46 / NRRL 194 / M139) (Aspergillus nidulans).